We begin with the raw amino-acid sequence, 505 residues long: Deoxyguanosinetriphosphate triphosphohydrolase (505 aa).

Residues 66 to 273 (RLTHSMEVQQ…MEAADDISYC (208 aa)) enclose the HD domain.

Belongs to the dGTPase family. Type 1 subfamily. In terms of assembly, homotetramer. Mg(2+) is required as a cofactor.

It carries out the reaction dGTP + H2O = 2'-deoxyguanosine + triphosphate + H(+). Functionally, dGTPase preferentially hydrolyzes dGTP over the other canonical NTPs. The chain is Deoxyguanosinetriphosphate triphosphohydrolase from Escherichia fergusonii (strain ATCC 35469 / DSM 13698 / CCUG 18766 / IAM 14443 / JCM 21226 / LMG 7866 / NBRC 102419 / NCTC 12128 / CDC 0568-73).